Reading from the N-terminus, the 66-residue chain is ATP synthase F(0) complex subunit 8 (66 aa).

Residue M1 is modified to N-formylmethionine. A helical membrane pass occupies residues 8–24 (TWLTMILSMFLTLFIIF). K54 bears the N6-acetyllysine; alternate mark. K54 is modified (N6-succinyllysine; alternate). K57 carries the post-translational modification N6-acetyllysine.

It belongs to the ATPase protein 8 family. As to quaternary structure, component of the ATP synthase complex composed at least of ATP5F1A/subunit alpha, ATP5F1B/subunit beta, ATP5MC1/subunit c (homooctomer), MT-ATP6/subunit a, MT-ATP8/subunit 8, ATP5ME/subunit e, ATP5MF/subunit f, ATP5MG/subunit g, ATP5MK/subunit k, ATP5MJ/subunit j, ATP5F1C/subunit gamma, ATP5F1D/subunit delta, ATP5F1E/subunit epsilon, ATP5PF/subunit F6, ATP5PB/subunit b, ATP5PD/subunit d, ATP5PO/subunit OSCP. ATP synthase complex consists of a soluble F(1) head domain (subunits alpha(3) and beta(3)) - the catalytic core - and a membrane F(0) domain - the membrane proton channel (subunits c, a, 8, e, f, g, k and j). These two domains are linked by a central stalk (subunits gamma, delta, and epsilon) rotating inside the F1 region and a stationary peripheral stalk (subunits F6, b, d, and OSCP). Interacts with PRICKLE3.

The protein resides in the mitochondrion membrane. Its function is as follows. Subunit 8, of the mitochondrial membrane ATP synthase complex (F(1)F(0) ATP synthase or Complex V) that produces ATP from ADP in the presence of a proton gradient across the membrane which is generated by electron transport complexes of the respiratory chain. ATP synthase complex consist of a soluble F(1) head domain - the catalytic core - and a membrane F(1) domain - the membrane proton channel. These two domains are linked by a central stalk rotating inside the F(1) region and a stationary peripheral stalk. During catalysis, ATP synthesis in the catalytic domain of F(1) is coupled via a rotary mechanism of the central stalk subunits to proton translocation. In vivo, can only synthesize ATP although its ATP hydrolase activity can be activated artificially in vitro. Part of the complex F(0) domain. The protein is ATP synthase F(0) complex subunit 8 of Bos taurus (Bovine).